The primary structure comprises 348 residues: Heat-inducible transcription repressor HrcA (348 aa).

Belongs to the HrcA family.

Its function is as follows. Negative regulator of class I heat shock genes (grpE-dnaK-dnaJ and groELS operons). Prevents heat-shock induction of these operons. In Chlorobium chlorochromatii (strain CaD3), this protein is Heat-inducible transcription repressor HrcA.